The primary structure comprises 290 residues: Ribosomal RNA small subunit methyltransferase H (290 aa).

S-adenosyl-L-methionine is bound by residues 35–37 (GGH), Asp54, Phe81, Asp97, and Gln104.

The protein belongs to the methyltransferase superfamily. RsmH family.

It is found in the cytoplasm. It carries out the reaction cytidine(1402) in 16S rRNA + S-adenosyl-L-methionine = N(4)-methylcytidine(1402) in 16S rRNA + S-adenosyl-L-homocysteine + H(+). Functionally, specifically methylates the N4 position of cytidine in position 1402 (C1402) of 16S rRNA. The chain is Ribosomal RNA small subunit methyltransferase H from Picosynechococcus sp. (strain ATCC 27264 / PCC 7002 / PR-6) (Agmenellum quadruplicatum).